The chain runs to 268 residues: Protein limb expression 1 homolog (268 aa).

It belongs to the LIX1 family. In terms of assembly, interacts with ft (via intracellular domain) and ds (via intracellular domain).

Its subcellular location is the apical cell membrane. The protein localises to the cytoplasm. Its function is as follows. Component of the Fat (ft) signaling pathway that functions in normal development of various organs such as the wing and leg. In developing imaginal disks, involved in regulating both the protein levels and apical localization of ft and ds. Involved in establishing planar cell polarity (PCP) along the anterior-posterior axis of the wing (the early Fz signaling event), probably by acting upstream of ds and ft to regulate Fz activity. The sequence is that of Protein limb expression 1 homolog from Drosophila melanogaster (Fruit fly).